Consider the following 163-residue polypeptide: CASP-like protein 1C2 (163 aa).

At 1–6 (MAKSNK) the chain is on the cytoplasmic side. A helical transmembrane segment spans residues 7-27 (IFTNTLRLLALAATVVAIVFM). Over 28-52 (VTSHDSAQVLNLTFTAKYSNTPAFK) the chain is Extracellular. An N-linked (GlcNAc...) asparagine glycan is attached at Asn-38. Residues 53–73 (FLVIGEAIAGGYTVISILLSF) traverse the membrane as a helical segment. Residues 74–79 (KGLFWR) are Cytoplasmic-facing. Residues 80-100 (LIVILDMVTTVLLTSSISAAL) form a helical membrane-spanning segment. Topologically, residues 101–128 (AIAQVGKKGNTHAGWLPICGQVPDFCDY) are extracellular. A helical membrane pass occupies residues 129–149 (VTIALIAGFAAAIIYFVLLLC). Residues 150–163 (SLYVVLSPIFVATP) are Cytoplasmic-facing.

This sequence belongs to the Casparian strip membrane proteins (CASP) family. In terms of assembly, homodimer and heterodimers.

It is found in the cell membrane. The protein is CASP-like protein 1C2 of Populus trichocarpa (Western balsam poplar).